We begin with the raw amino-acid sequence, 554 residues long: Dihydroxy-acid dehydratase (554 aa).

Residue D78 participates in Mg(2+) binding. C119 is a [2Fe-2S] cluster binding site. Mg(2+)-binding residues include D120 and K121. At K121 the chain carries N6-carboxylysine. C191 contacts [2Fe-2S] cluster. Position 442 (E442) interacts with Mg(2+). Residue S468 is the Proton acceptor of the active site.

This sequence belongs to the IlvD/Edd family. As to quaternary structure, homodimer. [2Fe-2S] cluster is required as a cofactor. Requires Mg(2+) as cofactor.

The catalysed reaction is (2R)-2,3-dihydroxy-3-methylbutanoate = 3-methyl-2-oxobutanoate + H2O. The enzyme catalyses (2R,3R)-2,3-dihydroxy-3-methylpentanoate = (S)-3-methyl-2-oxopentanoate + H2O. It functions in the pathway amino-acid biosynthesis; L-isoleucine biosynthesis; L-isoleucine from 2-oxobutanoate: step 3/4. It participates in amino-acid biosynthesis; L-valine biosynthesis; L-valine from pyruvate: step 3/4. Functions in the biosynthesis of branched-chain amino acids. Catalyzes the dehydration of (2R,3R)-2,3-dihydroxy-3-methylpentanoate (2,3-dihydroxy-3-methylvalerate) into 2-oxo-3-methylpentanoate (2-oxo-3-methylvalerate) and of (2R)-2,3-dihydroxy-3-methylbutanoate (2,3-dihydroxyisovalerate) into 2-oxo-3-methylbutanoate (2-oxoisovalerate), the penultimate precursor to L-isoleucine and L-valine, respectively. This is Dihydroxy-acid dehydratase from Acetivibrio thermocellus (strain ATCC 27405 / DSM 1237 / JCM 9322 / NBRC 103400 / NCIMB 10682 / NRRL B-4536 / VPI 7372) (Clostridium thermocellum).